The chain runs to 183 residues: Transmembrane protein 52B (183 aa).

Residues Met-1–Cys-24 form the signal peptide. The helical transmembrane segment at Val-40–Leu-60 threads the bilayer. The interval Asp-158–Asn-183 is disordered. Residues Pro-163–Arg-177 are compositionally biased toward basic and acidic residues.

The protein localises to the membrane. The protein is Transmembrane protein 52B (TMEM52B) of Homo sapiens (Human).